A 654-amino-acid polypeptide reads, in one-letter code: Macrolide export ATP-binding/permease protein MacB (654 aa).

The region spanning 6–244 is the ABC transporter domain; it reads IELRGLRREF…RAGDAPTRQP (239 aa). 42–49 is an ATP binding site; the sequence is GASGSGKS. The next 4 membrane-spanning stretches (helical) occupy residues 278-298, 527-547, 584-604, and 619-639; these read FLTM…VAVG, LTLM…IGVM, VVCL…AALF, and SIAA…YLPA.

The protein belongs to the ABC transporter superfamily. Macrolide exporter (TC 3.A.1.122) family. Homodimer.

It is found in the cell inner membrane. Functionally, non-canonical ABC transporter that contains transmembrane domains (TMD), which form a pore in the inner membrane, and an ATP-binding domain (NBD), which is responsible for energy generation. Confers resistance against macrolides. The chain is Macrolide export ATP-binding/permease protein MacB from Rhodopseudomonas palustris (strain HaA2).